A 366-amino-acid chain; its full sequence is MMFVHIADNHLGYRQYNLDDREKDIYDSFKLCIKKILEIKPDVVLHSGDLFNDLRPPVKALRIAMQAFKKLHENNIKVYIVAGNHEMPRRLGEESPLALLKDYVKILDGKDVINVNGEEIFICGTYYHKKSKREEMLDKLKNFESEAKNYKKKILMLHQGINPYIPLDYELEHFDLPKFSYYALGHIHKRILERFNDGILAYSGSTEIIYRNEYEDYKKEGKGFYLVDFSGNDLDISDIEKIDIECREFVEVNIKDKKSFNEAVNKIERCKNKPVVFGKIKREFKPWFDTLKDKILINKAIIVDDEFIDMPDNVDIESLNIKELLVDYANRQGIDGDLVLSLYKALLNNENWKELLDEYYNTKFRG.

4 residues coordinate Mn(2+): Asp8, His10, Asp49, and Asn84. His85 acts as the Proton donor in catalysis. His158, His186, and His188 together coordinate Mn(2+).

The protein belongs to the MRE11/RAD32 family. In terms of assembly, homodimer. Forms a heterotetramer composed of two Mre11 subunits and two Rad50 subunits. Mn(2+) serves as cofactor.

Nuclease activity is regulated by Rad50. Part of the Rad50/Mre11 complex, which is involved in the early steps of DNA double-strand break (DSB) repair. The complex may facilitate opening of the processed DNA ends to aid in the recruitment of HerA and NurA. Mre11 binds to DSB ends and has both double-stranded 3'-5' exonuclease activity and single-stranded endonuclease activity. This Methanocaldococcus jannaschii (strain ATCC 43067 / DSM 2661 / JAL-1 / JCM 10045 / NBRC 100440) (Methanococcus jannaschii) protein is DNA double-strand break repair protein Mre11.